Reading from the N-terminus, the 206-residue chain is MARYIGPKCKLSRREGTDLFLKSGVRALESKCNIEAAPGIHGQRRGRQSDYGTQLREKQKVRRIYGVLERQFRGYYQAAASKKGATGENLLQLLECRLDNVVYRMGFGSTRSESRQLVSHKAISVNGKTVNIPSYQVRPGDVVAVREKSLGQLRIVQALELCAQRGRVEWVDVDAAKKSGVFKNVPARSDLSADINENLIVELYSK.

In terms of domain architecture, S4 RNA-binding spans 96–156; it reads CRLDNVVYRM…EKSLGQLRIV (61 aa).

This sequence belongs to the universal ribosomal protein uS4 family. In terms of assembly, part of the 30S ribosomal subunit. Contacts protein S5. The interaction surface between S4 and S5 is involved in control of translational fidelity.

In terms of biological role, one of the primary rRNA binding proteins, it binds directly to 16S rRNA where it nucleates assembly of the body of the 30S subunit. Its function is as follows. With S5 and S12 plays an important role in translational accuracy. In Pseudomonas putida (strain ATCC 47054 / DSM 6125 / CFBP 8728 / NCIMB 11950 / KT2440), this protein is Small ribosomal subunit protein uS4.